The following is a 394-amino-acid chain: Metal tolerance protein 11 (394 aa).

The Cytoplasmic segment spans residues 1 to 103; sequence MVEPASPDSD…EQDNLAKSET (103 aa). A helical membrane pass occupies residues 104–124; the sequence is LAIRISNIANMLLFAAKVYAS. At 125–130 the chain is on the vacuolar side; sequence VTSGSL. The helical transmembrane segment at 131-151 threads the bilayer; the sequence is AIIASTLDSLLDLLSGFILWF. Residues 152–172 lie on the Cytoplasmic side of the membrane; it reads TAFSMQTPNPYQYPIGKKRMQ. The chain crosses the membrane as a helical span at residues 173-193; the sequence is PLGILVFASVMATLGLQIILE. The Vacuolar portion of the chain corresponds to 194-212; that stretch reads SLRTMLSSHKEFNLTKEQE. A helical membrane pass occupies residues 213–233; that stretch reads SWVVGIMLSVTLVKLLLVLYC. Over 234-251 the chain is Cytoplasmic; the sequence is RSFTNEIVKAYAQDHFFD. Residues 252–272 form a helical membrane-spanning segment; sequence VITNIIGLIAVILANYIDYWI. Residue aspartate 273 is a topological domain, vacuolar. A helical membrane pass occupies residues 274–294; that stretch reads PVGAIILALYTIRTWSMTVLE. Over 295 to 394 the chain is Cytoplasmic; sequence NVNSLVGKSA…HKPEHARSHC (100 aa).

This sequence belongs to the cation diffusion facilitator (CDF) transporter (TC 2.A.4) family. SLC30A subfamily. In terms of tissue distribution, widely expressed.

The protein localises to the prevacuolar compartment membrane. It is found in the golgi apparatus membrane. Its function is as follows. Cation/proton antiporter involved in endogenous manganese tolerance probably through vesicular trafficking and exocytosis. In Arabidopsis thaliana (Mouse-ear cress), this protein is Metal tolerance protein 11 (MTP11).